The chain runs to 462 residues: uncharacterized protein (462 aa).

The next 2 membrane-spanning stretches (helical) occupy residues 12-32 and 257-277; these read WWWL…APTV and GLCV…LELV.

The protein belongs to the HHV-5 US29 protein family.

The protein resides in the host membrane. This is an uncharacterized protein from Human cytomegalovirus (strain AD169) (HHV-5).